Consider the following 648-residue polypeptide: MVEIILPDGSSRSYDQETLTCGQIAASIGKGLAKAAIAGVVNGQKVDLDAPVPHGAQVAIITEDSPEGLEIIRHSASHLMAQAVKTLFPQAQVTIGPAIENGFYYDFDYERPFTPDDLTAIENCMRKLAKRNEKVERRVMPRDEAVAYFQAMGELYKAEIIGAIPAGEDVSLYSQGEFTDLCRGPHVPSTGKLKAFKVMKAGGAYWRGDSRNKMLQRIYGTAWATEADLKAYLTQMEEAEKRDHRRIGKDLDLFSVQEDAGGGLVFWHPRGSRIRRVIEDFWKDRHVEAGYEFLYTPHIANRQLWNTSGHTDFYSDSMFSPMEVDEQAYQIRPMNCPFHILIYKDRRHSYRELPFRWGELGTVYRYEMSGALHGLFRVRGFTQDDAHIFCTEQQIEEEIQRILDLTLDILRTYGFSDFEINLSTRPEKSVGSAAIWDKATEALRRAIVSRDLSYVVDEGGGAFYGPKIDVKITDSIGRKWQCSTVQLDFNLPERFDMGYIGEDGESHRPIMIHRALMGSLERFFGILVEHYAGWFPMWLAPVQAVVCSITDAQHAYAETVLAALKKAGLRVEIDLRNEKVGYKIREHTLKRVPYLLVVGDKEREEGTVNVRLRSGKSLGSLPIQDVVERLVEEAASRALSASEDQEEA.

In terms of domain architecture, TGS spans 1–62 (MVEIILPDGS…PHGAQVAIIT (62 aa)). The segment at 243-536 (DHRRIGKDLD…LVEHYAGWFP (294 aa)) is catalytic. 3 residues coordinate Zn(2+): C336, H387, and H513.

It belongs to the class-II aminoacyl-tRNA synthetase family. As to quaternary structure, homodimer. It depends on Zn(2+) as a cofactor.

It localises to the cytoplasm. The enzyme catalyses tRNA(Thr) + L-threonine + ATP = L-threonyl-tRNA(Thr) + AMP + diphosphate + H(+). In terms of biological role, catalyzes the attachment of threonine to tRNA(Thr) in a two-step reaction: L-threonine is first activated by ATP to form Thr-AMP and then transferred to the acceptor end of tRNA(Thr). Also edits incorrectly charged L-seryl-tRNA(Thr). The chain is Threonine--tRNA ligase from Magnetococcus marinus (strain ATCC BAA-1437 / JCM 17883 / MC-1).